The following is a 117-amino-acid chain: Envelope glycoprotein J (117 aa).

A signal peptide spans 1-26 (MRSLLFVVGAWVAAAVTHLTPNAALA). The disordered stretch occupies residues 26–64 (ATGTTPTVGANSTADPGTGANGTTVPAAGTPANSTTAAE). The span at 27-40 (TGTTPTVGANSTAD) shows a compositional bias: polar residues. The Extracellular portion of the chain corresponds to 27–73 (TGTTPTVGANSTADPGTGANGTTVPAAGTPANSTTAAETPAPFPPVD). 3 N-linked (GlcNAc...) asparagine; by host glycosylation sites follow: Asn-36, Asn-46, and Asn-58. The helical transmembrane segment at 74-94 (FALPVVIGGLCALTLAAMGAG) threads the bilayer. Topologically, residues 95–117 (ALLHRCCRRAAARRRQRAAYVYA) are cytoplasmic.

This sequence belongs to the alphaherpesvirinae glycoprotein J family.

The protein localises to the host Golgi apparatus membrane. The protein resides in the host endoplasmic reticulum membrane. It localises to the host endosome membrane. In terms of biological role, inhibits host cell apoptosis. Induces an increase in reactive oxygen species (ROS) in the host cell. This chain is Envelope glycoprotein J (gJ), found in Homo sapiens (Human).